Consider the following 78-residue polypeptide: Small ribosomal subunit protein bS18c (78 aa).

It belongs to the bacterial ribosomal protein bS18 family. In terms of assembly, part of the 30S ribosomal subunit.

It is found in the plastid. Its subcellular location is the chloroplast. This is Small ribosomal subunit protein bS18c from Oltmannsiellopsis viridis (Marine flagellate).